Consider the following 124-residue polypeptide: MPTIQQLVRKGRRDKIGKVKTAALKGNPQRRGVCTRVYTSTPKKPNSALRKVARVKLTSQVEVTAYIPGEGHNLQEHSMVLVRGGRVKDLPGVRYKIIRGSLDTQGVKNRKQARSRYGAKKEKS.

A 3-methylthioaspartic acid modification is found at Asp89. Positions 105–124 (QGVKNRKQARSRYGAKKEKS) are disordered. Over residues 108-118 (KNRKQARSRYG) the composition is skewed to basic residues.

Belongs to the universal ribosomal protein uS12 family. Part of the 30S ribosomal subunit. Contacts proteins S8 and S17. May interact with IF1 in the 30S initiation complex.

With S4 and S5 plays an important role in translational accuracy. In terms of biological role, interacts with and stabilizes bases of the 16S rRNA that are involved in tRNA selection in the A site and with the mRNA backbone. Located at the interface of the 30S and 50S subunits, it traverses the body of the 30S subunit contacting proteins on the other side and probably holding the rRNA structure together. The combined cluster of proteins S8, S12 and S17 appears to hold together the shoulder and platform of the 30S subunit. The protein is Small ribosomal subunit protein uS12 of Mycobacterium leprae (strain Br4923).